The primary structure comprises 64 residues: Large ribosomal subunit protein bL35 (64 aa).

A disordered region spans residues 1-55 (MPKMKSNKSVAARFKLTGSGQLKRTRPGKRHKLSKRSSQQKRNLSKQPLVDQGQV). Residues 23–39 (KRTRPGKRHKLSKRSSQ) show a composition bias toward basic residues.

It belongs to the bacterial ribosomal protein bL35 family.

This Chlamydia muridarum (strain MoPn / Nigg) protein is Large ribosomal subunit protein bL35.